The following is a 264-amino-acid chain: Thymidylate synthase (264 aa).

A dUMP-binding site is contributed by Arg21. His51 is a (6R)-5,10-methylene-5,6,7,8-tetrahydrofolate binding site. Position 126–127 (126–127 (RR)) interacts with dUMP. Cys146 serves as the catalytic Nucleophile. DUMP contacts are provided by residues 166–169 (RSAD), Asn177, and 207–209 (HLY). Residue Asp169 participates in (6R)-5,10-methylene-5,6,7,8-tetrahydrofolate binding. Ala263 serves as a coordination point for (6R)-5,10-methylene-5,6,7,8-tetrahydrofolate.

Belongs to the thymidylate synthase family. Bacterial-type ThyA subfamily. As to quaternary structure, homodimer.

It localises to the cytoplasm. It carries out the reaction dUMP + (6R)-5,10-methylene-5,6,7,8-tetrahydrofolate = 7,8-dihydrofolate + dTMP. It functions in the pathway pyrimidine metabolism; dTTP biosynthesis. In terms of biological role, catalyzes the reductive methylation of 2'-deoxyuridine-5'-monophosphate (dUMP) to 2'-deoxythymidine-5'-monophosphate (dTMP) while utilizing 5,10-methylenetetrahydrofolate (mTHF) as the methyl donor and reductant in the reaction, yielding dihydrofolate (DHF) as a by-product. This enzymatic reaction provides an intracellular de novo source of dTMP, an essential precursor for DNA biosynthesis. In Cupriavidus necator (strain ATCC 17699 / DSM 428 / KCTC 22496 / NCIMB 10442 / H16 / Stanier 337) (Ralstonia eutropha), this protein is Thymidylate synthase.